A 339-amino-acid polypeptide reads, in one-letter code: Holliday junction branch migration complex subunit RuvB (339 aa).

Residues 1 to 22 (MIDADPTLRPEPLPEDNDRALR) are disordered. Residues 1-182 (MIDADPTLRP…FGIPTRLQFY (182 aa)) are large ATPase domain (RuvB-L). Residues Leu21, Arg22, Gly63, Lys66, Thr67, Thr68, 129–131 (EDF), Arg172, Tyr182, and Arg219 each bind ATP. Residue Thr67 coordinates Mg(2+). The small ATPAse domain (RuvB-S) stretch occupies residues 183 to 253 (TIDELFEIVS…LADGALTRLG (71 aa)). The head domain (RuvB-H) stretch occupies residues 256-339 (QLGLDGADRR…PPKSQSDLFG (84 aa)). Positions 292, 311, and 316 each coordinate DNA.

Belongs to the RuvB family. In terms of assembly, homohexamer. Forms an RuvA(8)-RuvB(12)-Holliday junction (HJ) complex. HJ DNA is sandwiched between 2 RuvA tetramers; dsDNA enters through RuvA and exits via RuvB. An RuvB hexamer assembles on each DNA strand where it exits the tetramer. Each RuvB hexamer is contacted by two RuvA subunits (via domain III) on 2 adjacent RuvB subunits; this complex drives branch migration. In the full resolvosome a probable DNA-RuvA(4)-RuvB(12)-RuvC(2) complex forms which resolves the HJ.

Its subcellular location is the cytoplasm. The catalysed reaction is ATP + H2O = ADP + phosphate + H(+). Functionally, the RuvA-RuvB-RuvC complex processes Holliday junction (HJ) DNA during genetic recombination and DNA repair, while the RuvA-RuvB complex plays an important role in the rescue of blocked DNA replication forks via replication fork reversal (RFR). RuvA specifically binds to HJ cruciform DNA, conferring on it an open structure. The RuvB hexamer acts as an ATP-dependent pump, pulling dsDNA into and through the RuvAB complex. RuvB forms 2 homohexamers on either side of HJ DNA bound by 1 or 2 RuvA tetramers; 4 subunits per hexamer contact DNA at a time. Coordinated motions by a converter formed by DNA-disengaged RuvB subunits stimulates ATP hydrolysis and nucleotide exchange. Immobilization of the converter enables RuvB to convert the ATP-contained energy into a lever motion, pulling 2 nucleotides of DNA out of the RuvA tetramer per ATP hydrolyzed, thus driving DNA branch migration. The RuvB motors rotate together with the DNA substrate, which together with the progressing nucleotide cycle form the mechanistic basis for DNA recombination by continuous HJ branch migration. Branch migration allows RuvC to scan DNA until it finds its consensus sequence, where it cleaves and resolves cruciform DNA. In Ruegeria sp. (strain TM1040) (Silicibacter sp.), this protein is Holliday junction branch migration complex subunit RuvB.